We begin with the raw amino-acid sequence, 187 residues long: Acireductone dioxygenase (187 aa).

The Fe(2+) site is built by His-87, His-89, Glu-93, and His-136. Residues His-87, His-89, Glu-93, and His-136 each coordinate Ni(2+).

Belongs to the acireductone dioxygenase (ARD) family. It depends on Fe(2+) as a cofactor. The cofactor is Ni(2+).

The protein resides in the cytoplasm. It localises to the nucleus. It carries out the reaction 1,2-dihydroxy-5-(methylsulfanyl)pent-1-en-3-one + O2 = 4-methylsulfanyl-2-oxobutanoate + formate + 2 H(+). It catalyses the reaction 1,2-dihydroxy-5-(methylsulfanyl)pent-1-en-3-one + O2 = 3-(methylsulfanyl)propanoate + CO + formate + 2 H(+). It functions in the pathway amino-acid biosynthesis; L-methionine biosynthesis via salvage pathway; L-methionine from S-methyl-5-thio-alpha-D-ribose 1-phosphate: step 5/6. Catalyzes 2 different reactions between oxygen and the acireductone 1,2-dihydroxy-3-keto-5-methylthiopentene (DHK-MTPene) depending upon the metal bound in the active site. Fe-containing acireductone dioxygenase (Fe-ARD) produces formate and 2-keto-4-methylthiobutyrate (KMTB), the alpha-ketoacid precursor of methionine in the methionine recycle pathway. Ni-containing acireductone dioxygenase (Ni-ARD) produces methylthiopropionate, carbon monoxide and formate, and does not lie on the methionine recycle pathway. In Cryptococcus neoformans var. neoformans serotype D (strain JEC21 / ATCC MYA-565) (Filobasidiella neoformans), this protein is Acireductone dioxygenase.